The following is a 566-amino-acid chain: F-box/WD repeat-containing protein 5 (566 aa).

In terms of domain architecture, F-box spans 3 to 49; that stretch reads EGGTPLLPDSLVYQIFLSLGPADVLAAGLVCRQWQAVSRDEFLWREQ. 4 WD repeats span residues 83 to 125, 126 to 178, 179 to 238, and 239 to 281; these read VEVQ…DLTI, SLLH…LDSF, ALLS…VKRL, and FKIQ…RIFD. The residue at position 151 (Ser-151) is a Phosphoserine; by PLK4. Ser-284 carries the post-translational modification Phosphoserine. A D-box motif is present at residues 303–311; that stretch reads RHFLDRVLE. WD repeat units lie at residues 394–447, 458–501, and 502–539; these read ALDH…DLLV, RALR…RHYN, and ICLA…KAWR.

The protein belongs to the FBXW5 family. As to quaternary structure, part of the SCF (SKP1-CUL1-F-box) E3 ubiquitin-protein ligase complex SCF(FBXW5) composed of CUL1, SKP1, RBX1 and FBXW5. Component of the DCX(FBXW5) E3 ubiquitin ligase complex, at least composed of (CUL4A or CUL4B), DDB1, FBXW5 and RBX1. Interacts with CDC20, EPS8, TSC1, TSC2 and SASS6. Interacts with TNFAIP8L1; TNFAIP8L1 competes with TSC2 to bind FBXW5 increasing TSC2 stability by preventing its ubiquitination. Post-translationally, phosphorylated at Ser-151 by PLK4 during the G1/S transition, leading to inhibit its ability to ubiquitinate SASS6. Ubiquitinated and degraded by the APC/C complex during mitosis and G1 phase.

Its subcellular location is the cytoplasm. It functions in the pathway protein modification; protein ubiquitination. Its function is as follows. Substrate recognition component of both SCF (SKP1-CUL1-F-box protein) and DCX (DDB1-CUL4-X-box) E3 ubiquitin-protein ligase complexes. Substrate recognition component of the SCF(FBXW5) E3 ubiquitin-protein ligase complex which mediates the ubiquitination and subsequent proteasomal degradation of SASS6 during S phase, leading to prevent centriole reduplication. The SCF(FBXW5) complex also mediates ubiquitination and degradation of actin-regulator EPS8 during G2 phase, leading to the transient degradation of EPS8 and subsequent cell shape changes required to allow mitotic progression. Substrate-specific adapter of the DCX(FBXW5) E3 ubiquitin-protein ligase complex which mediates the polyubiquitination and subsequent degradation of TSC2. May also act as a negative regulator of MAP3K7/TAK1 signaling in the interleukin-1B (IL1B) signaling pathway. This chain is F-box/WD repeat-containing protein 5 (FBXW5), found in Homo sapiens (Human).